Reading from the N-terminus, the 744-residue chain is Junctophilin-3 (744 aa).

Residues Met-1–Ile-723 lie on the Cytoplasmic side of the membrane. MORN repeat units lie at residues Tyr-15–Gly-37, Tyr-39–Thr-60, Tyr-61–Val-82, Tyr-83–Ala-105, Tyr-107–Thr-129, and Tyr-130–Met-152. Residues Ser-230–Thr-252 are disordered. The segment covering Lys-231 to Phe-244 has biased composition (low complexity). MORN repeat units lie at residues Tyr-288–Lys-310 and Tyr-311–Lys-333. Ser-440 is modified (phosphoserine). A Phosphothreonine modification is found at Thr-451. Disordered stretches follow at residues Thr-451–Pro-603 and Cys-624–Arg-677. Phosphoserine is present on Ser-457. Residue Thr-471 is modified to Phosphothreonine. Phosphoserine occurs at positions 475 and 506. 2 positions are modified to phosphoserine: Ser-699 and Ser-706. A helical; Anchor for type IV membrane protein transmembrane segment spans residues Leu-724–Ile-744.

The protein belongs to the junctophilin family. Specifically expressed in brain. Highest levels in the olfactory tubercle, caudate putamen, nucleus accumbens, hippocampal formation, piriform cortex and cerebellar cortex. Expressed in disctete neurons sites. In hippocampal formation, expressed in dendrites of hippocampal pyramidal and denate granule cells. In cerebellum, it is highly expressed in Purkinge cells, while it is weakly expressed in granular cells.

The protein localises to the cell membrane. It localises to the endoplasmic reticulum membrane. Its function is as follows. Junctophilins contribute to the formation of junctional membrane complexes (JMCs) which link the plasma membrane with the endoplasmic or sarcoplasmic reticulum in excitable cells. Provides a structural foundation for functional cross-talk between the cell surface and intracellular calcium release channels. JPH3 is brain-specific and appears to have an active role in certain neurons involved in motor coordination and memory. The polypeptide is Junctophilin-3 (Jph3) (Mus musculus (Mouse)).